The following is a 926-amino-acid chain: Up-regulator of cell proliferation (926 aa).

Residue Ser-3 is modified to Phosphoserine. The 236-residue stretch at 689 to 924 folds into the VLIG-type G domain; it reads RSRLVVLSAL…NIQQLIELLR (236 aa).

The protein belongs to the TRAFAC class dynamin-like GTPase superfamily. Very large inducible GTPase (VLIG) family.

The protein localises to the cytoplasm. The protein resides in the nucleus. May be involved in cell cycle progression through the regulation of cyclin D1 expression. The sequence is that of Up-regulator of cell proliferation (Urgcp) from Mus musculus (Mouse).